The chain runs to 213 residues: Inactive ribonuclease-like protein 10 (213 aa).

The first 24 residues, 1 to 24 (MKLTLVQIFFMMLLLLLGLGMGLG), serve as a signal peptide directing secretion. Residue asparagine 131 is glycosylated (N-linked (GlcNAc...) asparagine).

It belongs to the pancreatic ribonuclease family. Post-translationally, the N-terminus is blocked. Glycosylated. In terms of tissue distribution, male-specific expression in proximal caput of the epididymis.

Its subcellular location is the secreted. Functionally, secreted proximal epididymal protein required for post-testicular sperm maturation and male fertility. May be involved in sperm adhesion to the egg zona pellucida. Does not have ribonuclease activity. This chain is Inactive ribonuclease-like protein 10 (RNASE10), found in Equus caballus (Horse).